We begin with the raw amino-acid sequence, 245 residues long: Zinc import ATP-binding protein ZnuC (245 aa).

In terms of domain architecture, ABC transporter spans 27 to 244 (LTADSLTLFY…AKFLSVFPNN (218 aa)). 59-66 (GPNGGGKT) provides a ligand contact to ATP.

This sequence belongs to the ABC transporter superfamily. Zinc importer (TC 3.A.1.15.5) family. As to quaternary structure, the complex is composed of two ATP-binding proteins (ZnuC), two transmembrane proteins (ZnuB) and a solute-binding protein (ZnuA).

It is found in the cell inner membrane. It carries out the reaction Zn(2+)(out) + ATP(in) + H2O(in) = Zn(2+)(in) + ADP(in) + phosphate(in) + H(+)(in). Its function is as follows. Part of the ABC transporter complex ZnuABC involved in zinc import. Responsible for energy coupling to the transport system. The protein is Zinc import ATP-binding protein ZnuC of Anaplasma marginale (strain St. Maries).